Consider the following 156-residue polypeptide: DNA mismatch endonuclease Vsr (156 aa).

Positions 51 and 63 each coordinate Mg(2+).

This sequence belongs to the Vsr family. It depends on Mg(2+) as a cofactor. Zn(2+) is required as a cofactor.

Functionally, deamination of 5-methylcytosine in DNA results in T/G mismatches. If unrepaired, these mismatches can lead to C-to-T transition mutations. The very short patch (VSP) repair process in E.coli counteracts the mutagenic process by repairing the mismatches in favor of the G-containing strand. This enzyme is an endonuclease that nicks double-stranded DNA within the sequence CT(AT)GN or NT(AT)GG next to the thymidine residue that is mismatched to 2'-deoxyguanosine. The incision is mismatch-dependent and strand-specific. In Escherichia coli (strain K12), this protein is DNA mismatch endonuclease Vsr.